Here is a 149-residue protein sequence, read N- to C-terminus: Arginine repressor (149 aa).

The protein belongs to the ArgR family.

Its subcellular location is the cytoplasm. Its pathway is amino-acid biosynthesis; L-arginine biosynthesis [regulation]. Its function is as follows. Regulates arginine biosynthesis genes. The chain is Arginine repressor from Chlorobium phaeobacteroides (strain DSM 266 / SMG 266 / 2430).